The following is a 1152-amino-acid chain: MLRKVTVAAVCATRRKLCEAGRELAALWGIETRGRCEDSAAVRPFPILAMPGRNKAKSTCSCPDLQPNGQDLGENSRVARLGADESEEEGRRGSLSNAGDPEIVKSPSDPKQYRYIKLQNGLQALLISDLSNMEGKTGNTTDDEEEEEVEEEEEDDDEDSGAEIEDDDEEGFDDEDEFDDEHDDDLDTEDNELEELEERAEARKKKTTEKQSAAALCVGVGSFADPDDLPGLAHFLEHMVFMGSLKYPDENGFDAFLKKHGGSDNASTDCERTVFQFDVQRKYFKEALDRWAQFFIHPLMIRDAIDREVEAVDSEYQLARPSDANRKEMLFGSLARPGHPMGKFFWGNAETLKHEPKKNNIDTHARLREFWLRYYSAHYMTLVVQSKETLDTLEKWVTEIFSQIPNNGLPRPNFGHLTDPFDTPAFNKLYRVVPIRKIHALTITWALPPQQQHYRVKPLHYISWLVGHEGKGSILSFLRKKCWALALFGGNGETGFEQNSTYSVFSISITLTDEGYEHFYEVAYTVFQYLKMLQKLGPEKRIFEEIQKIEDNEFHYQEQTDPVEYVENMCENMQPYPLQDILTGDQLLFEYKPEVIGEALNQLVPQKANLVLLSGANEGKCDLKEKWFGTQYSIEDIENSWAELWNSNFELNPDLHLPAENKYIATDFTLKAFDCPETEYPVKIVNTPQGCLWYKKDNKFKIPKAYIRFHLISPLIQRSAANVVLFDIFANILTHNLAEPAYEADVAQLEYKLVAGEHGLIIRVKGFNHKLPLLFQLIVDYLAEFNSTPAVFTMITEQLKKTYFNILIKPETLAKDVRLLILEYARWSMIDKYQALMDGLSLESLLSFVKEFKSQLFVEGLVQGNVTSTESMDFLKYVVDKLNFKPLEQEMPVQFQVVELPSGHHLCKVKALNKGDANSEVTVYYQSGTRSLREYTLMELLVMHMEEPCFDFLRTKQTLGYHVYPTCRSTSGILGFSVTVGTQATKYNSEVVDKKIEEFLSSFEEKIENLTEEAFNTQVTALIKLKECEDTHLGEEVDRNWNEVVTQQYLFDRLAHEIEALKSFSKSDLVNWFKAHRGPGSKMLSVHVVGYGKYELEEDGTPSSEDSNSSCEVMQLTYLPTSPLLADCIIPITDIRAFTTTLNLLPYHKIVK.

Positions 1 to 20 are cleaved as a signal peptide; sequence MLRKVTVAAVCATRRKLCEA. Disordered stretches follow at residues 81–108 and 133–208; these read LGAD…KSPS and MEGK…KKTT. Phosphoserine is present on residues Ser86, Ser94, and Ser96. A compositionally biased stretch (acidic residues) spans 141-198; it reads TDDEEEEEVEEEEEDDDEDSGAEIEDDDEEGFDDEDEFDDEHDDDLDTEDNELEELEE. Residue His234 coordinates Zn(2+). Glu237 serves as the catalytic Proton acceptor. Positions 238 and 315 each coordinate Zn(2+).

This sequence belongs to the peptidase M16 family. Interacts with BACE1 and NRG1. Requires Zn(2+) as cofactor.

It is found in the mitochondrion. Its subcellular location is the cell projection. The protein resides in the dendrite. It catalyses the reaction Hydrolysis of polypeptides, preferably at -Xaa-|-Arg-Lys-, and less commonly at -Arg-|-Arg-Xaa-, in which Xaa is not Arg or Lys.. In terms of biological role, cleaves peptide substrates on the N-terminus of arginine residues in dibasic pairs. Is a critical activator of BACE1- and ADAM17-mediated pro-neuregulin ectodomain shedding, involved in the positive regulation of axonal maturation and myelination. Required for proper functioning of 2-oxoglutarate dehydrogenase (OGDH). The polypeptide is Nardilysin (Pongo abelii (Sumatran orangutan)).